The primary structure comprises 415 residues: MQMSYAIRCAFYQLLLAALMLVAMLQLLYLSLLSGLHGQEEQDQYFEFFPPSPRSVDQVKTQLRTALASGGVLDASGDYRVYRGLLKTTMDPNDVILATHASVDNLLHLSGLLERWEGPLSVSVFAATKEEAQLATVLAYALSSHCPDMRARVAMHLVCPSRYEAAVPDPREPGEFALLRSCQEVFDKLARVAQPGINYALGTNVSYPNNLLRNLAREGANYALVIDVDMVPSEGLWRGLREMLDQSNQWGGTALVVPAFEIRRARRMPMNKNELVQLYQVGEVRPFYYGLCTPCQAPTNYSRWVNLPEESLLRPAYVVPWQDPWEPFYVAGGKVPTFDERFRQYGFNRISQACELHVAGFDFEVLNEGFLVHKGFKEALKFHPQKEAENQHNKILYRQFKQELKAKYPNSPRRC.

Over 1–8 the chain is Cytoplasmic; it reads MQMSYAIR. A helical; Signal-anchor for type II membrane protein transmembrane segment spans residues 9–36; that stretch reads CAFYQLLLAALMLVAMLQLLYLSLLSGL. Over 37 to 415 the chain is Lumenal; the sequence is HGQEEQDQYF…AKYPNSPRRC (379 aa). Asn-204 is a glycosylation site (N-linked (GlcNAc...) asparagine). Mn(2+) contacts are provided by Asp-227 and Asp-229. Asn-300 is a glycosylation site (N-linked (GlcNAc...) asparagine).

Belongs to the glycosyltransferase 49 family. Interacts with LARGE1 and LARGE2. Mn(2+) is required as a cofactor.

It localises to the golgi apparatus membrane. It catalyses the reaction 3-O-[beta-D-Xyl-(1-&gt;4)-Rib-ol-P-Rib-ol-P-3-beta-D-GalNAc-(1-&gt;3)-beta-D-GlcNAc-(1-&gt;4)-(O-6-P-alpha-D-Man)]-Thr-[protein] + UDP-alpha-D-glucuronate = 3-O-[beta-D-GlcA-(1-&gt;3)-beta-D-Xyl-(1-&gt;4)-Rib-ol-P-Rib-ol-P-3-beta-D-GalNAc-(1-&gt;3)-beta-D-GlcNAc-(1-&gt;4)-(O-6-P-alpha-D-Man)]-Thr-[protein] + UDP + H(+). The protein operates within protein modification; protein glycosylation. Functionally, beta-1,4-glucuronyltransferase involved in O-mannosylation of alpha-dystroglycan (DAG1). Transfers a glucuronic acid (GlcA) residue onto a xylose (Xyl) acceptor to produce the glucuronyl-beta-1,4-xylose-beta disaccharide primer, which is further elongated by LARGE1, during synthesis of phosphorylated O-mannosyl glycan. Phosphorylated O-mannosyl glycan is a carbohydrate structure present in alpha-dystroglycan (DAG1), which is required for binding laminin G-like domain-containing extracellular proteins with high affinity. Required for axon guidance; via its function in O-mannosylation of alpha-dystroglycan (DAG1). This Pongo abelii (Sumatran orangutan) protein is Beta-1,4-glucuronyltransferase 1.